The sequence spans 201 residues: MPSLPPQRAAVLAFLQEQAQAGVSPSLAEIAQAFGFASRNAAQKHVQALADAGLIELLPNQKRGIRLPGGAGRDALLALPVLGRVAAGLPIGADIGLERQLWLDRALFSLRPDYLLQVQGDSMIDDGILDGDLVGVHRSNEARDGQIVVARVDGEITIKRLERGAERIRLLPRNRAHAPIVVAADADFAIEGLYCGLIRQG.

Residues 27-47 (LAEIAQAFGFASRNAAQKHVQ) constitute a DNA-binding region (H-T-H motif). Residues serine 122 and lysine 159 each act as for autocatalytic cleavage activity in the active site.

Belongs to the peptidase S24 family. Homodimer.

It carries out the reaction Hydrolysis of Ala-|-Gly bond in repressor LexA.. Functionally, represses a number of genes involved in the response to DNA damage (SOS response), including recA and lexA. In the presence of single-stranded DNA, RecA interacts with LexA causing an autocatalytic cleavage which disrupts the DNA-binding part of LexA, leading to derepression of the SOS regulon and eventually DNA repair. This Xanthomonas axonopodis pv. citri (strain 306) protein is LexA repressor 1.